A 314-amino-acid chain; its full sequence is 4-hydroxy-3-methylbut-2-enyl diphosphate reductase (314 aa).

C12 is a [4Fe-4S] cluster binding site. 2 residues coordinate (2E)-4-hydroxy-3-methylbut-2-enyl diphosphate: H41 and H74. Dimethylallyl diphosphate contacts are provided by H41 and H74. H41 and H74 together coordinate isopentenyl diphosphate. C96 lines the [4Fe-4S] cluster pocket. H124 serves as a coordination point for (2E)-4-hydroxy-3-methylbut-2-enyl diphosphate. H124 is a binding site for dimethylallyl diphosphate. H124 contributes to the isopentenyl diphosphate binding site. E126 (proton donor) is an active-site residue. T167 serves as a coordination point for (2E)-4-hydroxy-3-methylbut-2-enyl diphosphate. Residue C197 coordinates [4Fe-4S] cluster. The (2E)-4-hydroxy-3-methylbut-2-enyl diphosphate site is built by S225, S226, N227, and S269. Dimethylallyl diphosphate contacts are provided by S225, S226, N227, and S269. Isopentenyl diphosphate is bound by residues S225, S226, N227, and S269.

It belongs to the IspH family. The cofactor is [4Fe-4S] cluster.

The catalysed reaction is isopentenyl diphosphate + 2 oxidized [2Fe-2S]-[ferredoxin] + H2O = (2E)-4-hydroxy-3-methylbut-2-enyl diphosphate + 2 reduced [2Fe-2S]-[ferredoxin] + 2 H(+). It carries out the reaction dimethylallyl diphosphate + 2 oxidized [2Fe-2S]-[ferredoxin] + H2O = (2E)-4-hydroxy-3-methylbut-2-enyl diphosphate + 2 reduced [2Fe-2S]-[ferredoxin] + 2 H(+). It participates in isoprenoid biosynthesis; dimethylallyl diphosphate biosynthesis; dimethylallyl diphosphate from (2E)-4-hydroxy-3-methylbutenyl diphosphate: step 1/1. The protein operates within isoprenoid biosynthesis; isopentenyl diphosphate biosynthesis via DXP pathway; isopentenyl diphosphate from 1-deoxy-D-xylulose 5-phosphate: step 6/6. Its function is as follows. Catalyzes the conversion of 1-hydroxy-2-methyl-2-(E)-butenyl 4-diphosphate (HMBPP) into a mixture of isopentenyl diphosphate (IPP) and dimethylallyl diphosphate (DMAPP). Acts in the terminal step of the DOXP/MEP pathway for isoprenoid precursor biosynthesis. The chain is 4-hydroxy-3-methylbut-2-enyl diphosphate reductase from Haemophilus ducreyi (strain 35000HP / ATCC 700724).